A 346-amino-acid chain; its full sequence is Ribulose-5-phosphate reductase (346 aa).

Zn(2+) is bound by residues Cys45, His71, Glu72, and Glu151.

It belongs to the zinc-containing alcohol dehydrogenase family. The cofactor is Zn(2+).

It catalyses the reaction D-ribitol 5-phosphate + NADP(+) = D-ribulose 5-phosphate + NADPH + H(+). It functions in the pathway cell wall biogenesis; poly(ribitol phosphate) teichoic acid biosynthesis. In terms of biological role, catalyzes the NADPH dependent reduction of D-ribulose 5-phosphate to D-ribitol 5-phosphate. The protein is Ribulose-5-phosphate reductase of Streptococcus pneumoniae (strain ATCC BAA-255 / R6).